Consider the following 206-residue polypeptide: Large ribosomal subunit protein uL4 (206 aa).

Residues Gly46 to Thr77 are disordered.

This sequence belongs to the universal ribosomal protein uL4 family. Part of the 50S ribosomal subunit.

Its function is as follows. One of the primary rRNA binding proteins, this protein initially binds near the 5'-end of the 23S rRNA. It is important during the early stages of 50S assembly. It makes multiple contacts with different domains of the 23S rRNA in the assembled 50S subunit and ribosome. Forms part of the polypeptide exit tunnel. In Acidovorax ebreus (strain TPSY) (Diaphorobacter sp. (strain TPSY)), this protein is Large ribosomal subunit protein uL4.